Here is a 124-residue protein sequence, read N- to C-terminus: Putative membrane protein insertion efficiency factor (124 aa).

Positions 1 to 12 are enriched in basic and acidic residues; it reads MCPQPHADHAIT. Positions 1–26 are disordered; that stretch reads MCPQPHADHAITRGDTGAAGGRNWSG.

Belongs to the UPF0161 family.

Its subcellular location is the cell inner membrane. Could be involved in insertion of integral membrane proteins into the membrane. This Rhizobium meliloti (strain 1021) (Ensifer meliloti) protein is Putative membrane protein insertion efficiency factor.